A 272-amino-acid chain; its full sequence is Indole-3-glycerol phosphate synthase (272 aa).

This sequence belongs to the TrpC family.

It carries out the reaction 1-(2-carboxyphenylamino)-1-deoxy-D-ribulose 5-phosphate + H(+) = (1S,2R)-1-C-(indol-3-yl)glycerol 3-phosphate + CO2 + H2O. It participates in amino-acid biosynthesis; L-tryptophan biosynthesis; L-tryptophan from chorismate: step 4/5. In Mycolicibacterium gilvum (strain PYR-GCK) (Mycobacterium gilvum (strain PYR-GCK)), this protein is Indole-3-glycerol phosphate synthase.